We begin with the raw amino-acid sequence, 304 residues long: UDP-3-O-acyl-N-acetylglucosamine deacetylase (304 aa).

Zn(2+) is bound by residues histidine 78, histidine 237, and aspartate 241. The Proton donor role is filled by histidine 264.

Belongs to the LpxC family. The cofactor is Zn(2+).

It catalyses the reaction a UDP-3-O-[(3R)-3-hydroxyacyl]-N-acetyl-alpha-D-glucosamine + H2O = a UDP-3-O-[(3R)-3-hydroxyacyl]-alpha-D-glucosamine + acetate. It participates in glycolipid biosynthesis; lipid IV(A) biosynthesis; lipid IV(A) from (3R)-3-hydroxytetradecanoyl-[acyl-carrier-protein] and UDP-N-acetyl-alpha-D-glucosamine: step 2/6. Functionally, catalyzes the hydrolysis of UDP-3-O-myristoyl-N-acetylglucosamine to form UDP-3-O-myristoylglucosamine and acetate, the committed step in lipid A biosynthesis. This is UDP-3-O-acyl-N-acetylglucosamine deacetylase from Polynucleobacter asymbioticus (strain DSM 18221 / CIP 109841 / QLW-P1DMWA-1) (Polynucleobacter necessarius subsp. asymbioticus).